A 241-amino-acid polypeptide reads, in one-letter code: Alkylated DNA repair protein ALKBH6 homolog (241 aa).

The Fe2OG dioxygenase domain maps to A87–P232. Fe cation is bound by residues H105, D107, and H181. 2 residues coordinate 2-oxoglutarate: R223 and R229.

It belongs to the alkB family. Fe(2+) serves as cofactor.

Its subcellular location is the nucleus. Its function is as follows. Probable RNA demethylase that binds to both N6-methyladenosine-containing- (m(6)A) and C5-methylcytidine-containing- (m(5)C) RNAs, thus being a probable m(6)A and m(5)C eraser. Involved in responses to abscisic acid (ABA) via the modulation of the expression of ABA signaling-related genes (e.g. ABI3 and ABI4). Acts as a negative regulator during seed germination under abiotic stresses (e.g. salt, cold and ABA). Positive modulator of seedling growth and survival in response to drought and heat, but counteracts tolerance to salt. The sequence is that of Alkylated DNA repair protein ALKBH6 homolog from Arabidopsis thaliana (Mouse-ear cress).